Reading from the N-terminus, the 427-residue chain is Indole diterpene prenyltransferase penD (427 aa).

77–78 (YV) serves as a coordination point for L-tryptophan. Substrate is bound by residues arginine 99, lysine 186, tyrosine 188, arginine 259, lysine 261, tyrosine 263, tyrosine 344, tyrosine 409, and tyrosine 413.

The protein belongs to the tryptophan dimethylallyltransferase family.

Its pathway is secondary metabolite biosynthesis. In terms of biological role, indole diterpene prenyltransferase; part of the gene cluster that mediates the biosynthesis of the indole diterpenes penitrems. The geranylgeranyl diphosphate (GGPP) synthase penG catalyzes the first step in penitrem biosynthesis via conversion of farnesyl pyrophosphate and isopentyl pyrophosphate into geranylgeranyl pyrophosphate (GGPP). Condensation of indole-3-glycerol phosphate with GGPP by the prenyl transferase penC then forms 3-geranylgeranylindole (3-GGI). Epoxidation by the FAD-dependent monooxygenase penM leads to a epoxidized-GGI that is substrate of the terpene cyclase penB for cyclization to yield paspaline. Paspaline is subsequently converted to 13-desoxypaxilline by the cytochrome P450 monooxygenase penP, the latter being then converted to paxilline by the cytochrome P450 monooxygenase penQ. Paxilline is converted to beta-paxitriol via C-10 ketoreduction by the short-chain dehydrogenase PC-15 which can be monoprenylated at the C-20 by the indole diterpene prenyltransferase penD. A two-step elimination (acetylation and elimination) process performed by the O-acetyltransferase PC-16 and the P.simplicissimum ptmI-ortholog not yet identified in P.crustosum, leads to the production of the prenylated form of penijanthine. The FAD-linked oxidoreductase ptmO then converts the prenylated form of penijanthine into PC-M5 which is in turn transformed into PC-M4 by the aromatic dimethylallyltransferase PC-22. A series of oxidation steps involving 4 cytochrome P450 monooxygenases (PC-21, PC-05, PC-23, PC-20) and a FAD-dependent monooxygenase (PC-14) are required for the transformation of PC-M4 to penitrems A and E. Synthesis of these final products is proposed to proceed via penitrems D and C (PC-21, PC-05, PC-14) and penitrems B and F (PC-21, PC-05, PC-14, PC-23). In Penicillium crustosum (Blue mold fungus), this protein is Indole diterpene prenyltransferase penD.